The primary structure comprises 338 residues: Ketol-acid reductoisomerase (NADP(+)) (338 aa).

Residues Met1–Thr181 enclose the KARI N-terminal Rossmann domain. NADP(+) is bound by residues Tyr24 to Gln27, Arg47, Ser50, Ser52, and Asp82 to Gln85. His107 is an active-site residue. Gly133 is a binding site for NADP(+). The 146-residue stretch at Thr182–Ile327 folds into the KARI C-terminal knotted domain. Mg(2+) contacts are provided by Asp190, Glu194, Glu226, and Glu230. Substrate is bound at residue Ser251.

It belongs to the ketol-acid reductoisomerase family. Mg(2+) serves as cofactor.

The enzyme catalyses (2R)-2,3-dihydroxy-3-methylbutanoate + NADP(+) = (2S)-2-acetolactate + NADPH + H(+). It carries out the reaction (2R,3R)-2,3-dihydroxy-3-methylpentanoate + NADP(+) = (S)-2-ethyl-2-hydroxy-3-oxobutanoate + NADPH + H(+). It participates in amino-acid biosynthesis; L-isoleucine biosynthesis; L-isoleucine from 2-oxobutanoate: step 2/4. The protein operates within amino-acid biosynthesis; L-valine biosynthesis; L-valine from pyruvate: step 2/4. Its function is as follows. Involved in the biosynthesis of branched-chain amino acids (BCAA). Catalyzes an alkyl-migration followed by a ketol-acid reduction of (S)-2-acetolactate (S2AL) to yield (R)-2,3-dihydroxy-isovalerate. In the isomerase reaction, S2AL is rearranged via a Mg-dependent methyl migration to produce 3-hydroxy-3-methyl-2-ketobutyrate (HMKB). In the reductase reaction, this 2-ketoacid undergoes a metal-dependent reduction by NADPH to yield (R)-2,3-dihydroxy-isovalerate. This chain is Ketol-acid reductoisomerase (NADP(+)), found in Hahella chejuensis (strain KCTC 2396).